Reading from the N-terminus, the 402-residue chain is Eukaryotic initiation factor 4A (402 aa).

The Q motif motif lies at 29-57; the sequence is ESFDDMELKEELLRGIYGFGFEKPSAIQK. One can recognise a Helicase ATP-binding domain in the interval 60 to 230; the sequence is IVPCTTGKDV…NRFMRNPIRI (171 aa). Residue 73-80 coordinates ATP; that stretch reads AQSGTGKT. A DEAD box motif is present at residues 178–181; the sequence is DEAD. The region spanning 241-402 is the Helicase C-terminal domain; that stretch reads GIRQFYINVQ…EMPESIADLI (162 aa).

The protein belongs to the DEAD box helicase family. eIF4A subfamily. EIF4F is a multi-subunit complex, the composition of which varies with external and internal environmental conditions. It is composed of at least EIF4A, EIF4E and EIF4G.

It catalyses the reaction ATP + H2O = ADP + phosphate + H(+). ATP-dependent RNA helicase which is a subunit of the eIF4F complex involved in cap recognition and is required for mRNA binding to ribosome. In the current model of translation initiation, eIF4A unwinds RNA secondary structures in the 5'-UTR of mRNAs which is necessary to allow efficient binding of the small ribosomal subunit, and subsequent scanning for the initiator codon. This chain is Eukaryotic initiation factor 4A (inf-1), found in Caenorhabditis elegans.